The following is a 291-amino-acid chain: ATP synthase gamma chain (291 aa).

It belongs to the ATPase gamma chain family. As to quaternary structure, F-type ATPases have 2 components, CF(1) - the catalytic core - and CF(0) - the membrane proton channel. CF(1) has five subunits: alpha(3), beta(3), gamma(1), delta(1), epsilon(1). CF(0) has three main subunits: a, b and c.

Its subcellular location is the cell inner membrane. Its function is as follows. Produces ATP from ADP in the presence of a proton gradient across the membrane. The gamma chain is believed to be important in regulating ATPase activity and the flow of protons through the CF(0) complex. In Burkholderia thailandensis (strain ATCC 700388 / DSM 13276 / CCUG 48851 / CIP 106301 / E264), this protein is ATP synthase gamma chain.